A 682-amino-acid chain; its full sequence is Protein asunder (682 aa).

Residues 517–570 adopt a coiled-coil conformation; that stretch reads NGARLKLSKAKDQYRLLYRELEQLIHLNATTVHHKNLLESLQSLRAAYGEAKSE. The segment covering 571–583 has biased composition (polar residues); it reads PNSSLLRSYTESP. Positions 571 to 612 are disordered; it reads PNSSLLRSYTESPHSPERLEPIPSGGSSGSNSNSLLKASKRR. The Nuclear localization signal (NLS) signature appears at 606-612; that stretch reads LKASKRR.

This sequence belongs to the Integrator subunit 13 family. Belongs to the multiprotein complex Integrator, at least composed of IntS1, IntS2, IntS3, IntS4, omd/IntS5, IntS6, defl/IntS7, IntS8, IntS9, IntS10, IntS11, IntS12, asun/IntS13, IntS14 and IntS15. The core complex associates with protein phosphatase 2A subunits mts/PP2A and Pp2A-29B, to form the Integrator-PP2A (INTAC) complex. Phosphorylated.

The protein resides in the nucleus. It is found in the cytoplasm. Its subcellular location is the perinuclear region. Component of the integrator complex, a multiprotein complex that terminates RNA polymerase II (Pol II) transcription in the promoter-proximal region of genes. The integrator complex provides a quality checkpoint during transcription elongation by driving premature transcription termination of transcripts that are unfavorably configured for transcriptional elongation: the complex terminates transcription by (1) catalyzing dephosphorylation of the C-terminal domain (CTD) of Pol II subunit Polr2A/Rbp1 and Spt5, and (2) degrading the exiting nascent RNA transcript via endonuclease activity. The integrator complex is also involved in the 3'-end processing of the U7 snRNA, and also the spliceosomal snRNAs U1, U2, U4 and U5. This Drosophila ananassae (Fruit fly) protein is Protein asunder (asun).